We begin with the raw amino-acid sequence, 278 residues long: Ras-related protein rapC (278 aa).

10–17 (GASGTGKT) is a GTP binding site. Positions 32–40 (YDPTIEDLY) match the Effector region motif. Residues 58-62 (DTSGT) and 119-122 (NKCD) contribute to the GTP site. 2 disordered regions span residues 176-209 (NGSS…SSSS) and 236-278 (STSS…CLIM). Low complexity-rich tracts occupy residues 198-209 (GSNNSSINSSSS) and 236-251 (STSS…SQTN). A Cysteine methyl ester modification is found at Cys275. Cys275 carries the S-geranylgeranyl cysteine lipid modification. Residues 276-278 (LIM) constitute a propeptide, removed in mature form.

The protein belongs to the small GTPase superfamily. Ras family.

Its subcellular location is the cell membrane. It catalyses the reaction GTP + H2O = GDP + phosphate + H(+). In Dictyostelium discoideum (Social amoeba), this protein is Ras-related protein rapC (rapC).